Here is a 248-residue protein sequence, read N- to C-terminus: Probable transcriptional regulatory protein RPE_4771 (248 aa).

Positions 1–21 (MAGHSQFKNIMHRKGRQDAQK) are disordered.

It belongs to the TACO1 family.

Its subcellular location is the cytoplasm. The protein is Probable transcriptional regulatory protein RPE_4771 of Rhodopseudomonas palustris (strain BisA53).